A 1220-amino-acid polypeptide reads, in one-letter code: Cullin-associated NEDD8-dissociated protein 1 (1220 aa).

HEAT repeat units lie at residues 1–35 (MEEG…DANH), 42–79 (ESFP…KIPQ), 121–157 (FYTS…SLEI), 259–295 (ADYT…YQQV), 365–410 (LSRL…HVPR), 615–650 (IFLR…SVTD), 680–700 (TTAY…YLAE), 701–737 (SLLE…SILL), 738–775 (KSKN…VISK), 810–847 (FQSK…DYGK), 850–887 (LPAN…QSEK), and 1020–1057 (EVSQ…KSSV).

It belongs to the CAND family.

The protein resides in the nucleus. Key assembly factor of SCF (SKP1-CUL1-F-box protein) E3 ubiquitin ligase complexes that promotes the exchange of the substrate-recognition F-box subunit in SCF complexes, thereby playing a key role in the cellular repertoire of SCF complexes. Acts as a F-box protein exchange factor. The polypeptide is Cullin-associated NEDD8-dissociated protein 1 (knd1) (Schizosaccharomyces pombe (strain 972 / ATCC 24843) (Fission yeast)).